A 113-amino-acid chain; its full sequence is Flagellar hook-basal body complex protein FliE (113 aa).

It belongs to the FliE family.

The protein localises to the bacterial flagellum basal body. The polypeptide is Flagellar hook-basal body complex protein FliE (Burkholderia mallei (strain NCTC 10247)).